The primary structure comprises 195 residues: ATP-dependent Clp protease proteolytic subunit (195 aa).

Residue serine 99 is the Nucleophile of the active site. Residue histidine 124 is part of the active site.

The protein belongs to the peptidase S14 family. Fourteen ClpP subunits assemble into 2 heptameric rings which stack back to back to give a disk-like structure with a central cavity, resembling the structure of eukaryotic proteasomes.

It localises to the cytoplasm. The catalysed reaction is Hydrolysis of proteins to small peptides in the presence of ATP and magnesium. alpha-casein is the usual test substrate. In the absence of ATP, only oligopeptides shorter than five residues are hydrolyzed (such as succinyl-Leu-Tyr-|-NHMec, and Leu-Tyr-Leu-|-Tyr-Trp, in which cleavage of the -Tyr-|-Leu- and -Tyr-|-Trp bonds also occurs).. Cleaves peptides in various proteins in a process that requires ATP hydrolysis. Has a chymotrypsin-like activity. Plays a major role in the degradation of misfolded proteins. The sequence is that of ATP-dependent Clp protease proteolytic subunit from Caldicellulosiruptor saccharolyticus (strain ATCC 43494 / DSM 8903 / Tp8T 6331).